Reading from the N-terminus, the 500-residue chain is Lysine--tRNA ligase (500 aa).

Mg(2+) is bound by residues E411 and E418.

Belongs to the class-II aminoacyl-tRNA synthetase family. As to quaternary structure, homodimer. It depends on Mg(2+) as a cofactor.

Its subcellular location is the cytoplasm. The catalysed reaction is tRNA(Lys) + L-lysine + ATP = L-lysyl-tRNA(Lys) + AMP + diphosphate. This chain is Lysine--tRNA ligase, found in Actinobacillus pleuropneumoniae serotype 7 (strain AP76).